The following is a 149-amino-acid chain: Protein SprT-like (149 aa).

The SprT-like domain maps to 4 to 143 (TDYVKQVSLE…CGLCRGKLLL (140 aa)). Histidine 64 provides a ligand contact to Zn(2+). The active site involves glutamate 65. Residue histidine 68 participates in Zn(2+) binding.

It belongs to the SprT family. The cofactor is Zn(2+).

Its subcellular location is the cytoplasm. The chain is Protein SprT-like from Streptococcus pneumoniae (strain JJA).